The following is a 103-amino-acid chain: MVKVIDIGRVVVKVLGREAGRKAVVVDVVDENYVLITGPKTLTGVKRRRVNINHIEPTDKKVEIKRGASDEEVIKAVEAAGLVEYMRERVKPKMLGLTKAEVK.

This sequence belongs to the eukaryotic ribosomal protein eL14 family.

The sequence is that of Large ribosomal subunit protein eL14 from Pyrobaculum arsenaticum (strain DSM 13514 / JCM 11321 / PZ6).